Consider the following 344-residue polypeptide: Holliday junction branch migration complex subunit RuvB (344 aa).

Residues 1–182 are large ATPase domain (RuvB-L); that stretch reads MRIEALNTAP…FGINSRLDYY (182 aa). Residues Ile-21, Arg-22, Gly-63, Lys-66, Thr-67, Thr-68, 129-131, Arg-172, Tyr-182, and Arg-219 each bind ATP; that span reads EDY. Position 67 (Thr-67) interacts with Mg(2+). The small ATPAse domain (RuvB-S) stretch occupies residues 183–253; sequence NPELLQSIII…VARRTLESLE (71 aa). The interval 256–344 is head domain (RuvB-H); it reads EGGLDDMDKK…GSLFDTAEDG (89 aa). 2 residues coordinate DNA: Arg-311 and Arg-316.

This sequence belongs to the RuvB family. In terms of assembly, homohexamer. Forms an RuvA(8)-RuvB(12)-Holliday junction (HJ) complex. HJ DNA is sandwiched between 2 RuvA tetramers; dsDNA enters through RuvA and exits via RuvB. An RuvB hexamer assembles on each DNA strand where it exits the tetramer. Each RuvB hexamer is contacted by two RuvA subunits (via domain III) on 2 adjacent RuvB subunits; this complex drives branch migration. In the full resolvosome a probable DNA-RuvA(4)-RuvB(12)-RuvC(2) complex forms which resolves the HJ.

It localises to the cytoplasm. It catalyses the reaction ATP + H2O = ADP + phosphate + H(+). Functionally, the RuvA-RuvB-RuvC complex processes Holliday junction (HJ) DNA during genetic recombination and DNA repair, while the RuvA-RuvB complex plays an important role in the rescue of blocked DNA replication forks via replication fork reversal (RFR). RuvA specifically binds to HJ cruciform DNA, conferring on it an open structure. The RuvB hexamer acts as an ATP-dependent pump, pulling dsDNA into and through the RuvAB complex. RuvB forms 2 homohexamers on either side of HJ DNA bound by 1 or 2 RuvA tetramers; 4 subunits per hexamer contact DNA at a time. Coordinated motions by a converter formed by DNA-disengaged RuvB subunits stimulates ATP hydrolysis and nucleotide exchange. Immobilization of the converter enables RuvB to convert the ATP-contained energy into a lever motion, pulling 2 nucleotides of DNA out of the RuvA tetramer per ATP hydrolyzed, thus driving DNA branch migration. The RuvB motors rotate together with the DNA substrate, which together with the progressing nucleotide cycle form the mechanistic basis for DNA recombination by continuous HJ branch migration. Branch migration allows RuvC to scan DNA until it finds its consensus sequence, where it cleaves and resolves cruciform DNA. This is Holliday junction branch migration complex subunit RuvB from Chlorobaculum tepidum (strain ATCC 49652 / DSM 12025 / NBRC 103806 / TLS) (Chlorobium tepidum).